The chain runs to 295 residues: Protease HtpX (295 aa).

2 helical membrane-spanning segments follow: residues 4-24 (ILLF…TLSL) and 41-61 (SSLL…SLFI). His147 contributes to the Zn(2+) binding site. Glu148 is an active-site residue. His151 is a binding site for Zn(2+). The next 2 helical transmembrane spans lie at 158–178 (VTLA…ARII) and 199–219 (VATI…VMWF). Glu224 is a Zn(2+) binding site.

This sequence belongs to the peptidase M48B family. Requires Zn(2+) as cofactor.

Its subcellular location is the cell inner membrane. The chain is Protease HtpX from Pseudomonas putida (strain GB-1).